The following is a 685-amino-acid chain: MSQLFLILCFILTHFFAIATSLNDQGLALLSFKQSIQNQSDSVFTNWNSSDSNPCSWQGVTCNYDMRVVSIRLPNKRLSGSLDPSIGSLLSLRHINLRDNDFQGKLPVELFGLKGLQSLVLSGNSFSGFVPEEIGSLKSLMTLDLSENSFNGSISLSLIPCKKLKTLVLSKNSFSGDLPTGLGSNLVHLRTLNLSFNRLTGTIPEDVGSLENLKGTLDLSHNFFSGMIPTSLGNLPELLYVDLSYNNLSGPIPKFNVLLNAGPNAFQGNPFLCGLPIKISCSTRNTQVVPSQLYTRRANHHSRLCIILTATGGTVAGIIFLASLFIYYLRKASARANKDQNNRTCHINEKLKKTTKPEFLCFKTGNSESETLDENKNQQVFMPMDPEIEFDLDQLLKASAFLLGKSRIGLVYKVVLENGLMLAVRRLEDKGWLRLKEFLADVEAMAKIKHPNVLNLKACCWSPEEKLLIYDYIPNGDLGSAIQGRPGSVSCKQLTWTVRLKILRGIAKGLTYIHEFSPKRYVHGHINTSNILLGPNLEPKVSGFGLGRIVDTSSDIRSDQISPMETSSPILSRESYYQAPEAASKMTKPSQKWDVYSFGLVILEMVTGKSPVSSEMDLVMWVESASERNKPAWYVLDPVLARDRDLEDSMVQVIKIGLACVQKNPDKRPHMRSVLESFEKLVTSI.

The signal sequence occupies residues 1–21 (MSQLFLILCFILTHFFAIATS). At 22-305 (LNDQGLALLS…RRANHHSRLC (284 aa)) the chain is on the extracellular side. 2 N-linked (GlcNAc...) asparagine glycosylation sites follow: Asn-38 and Asn-48. LRR repeat units follow at residues 65–89 (DMRV…IGSL), 90–113 (LSLR…LFGL), 115–136 (GLQS…EIGS), 137–161 (LKSL…LIPC), 162–185 (KKLK…LGSN), 186–210 (LVHL…VGSL), 212–234 (NLKG…SLGN), and 235–260 (LPEL…VLLN). Asn-151 carries an N-linked (GlcNAc...) asparagine glycan. Asn-193 is a glycosylation site (N-linked (GlcNAc...) asparagine). Asn-247 is a glycosylation site (N-linked (GlcNAc...) asparagine). A helical membrane pass occupies residues 306-326 (IILTATGGTVAGIIFLASLFI). Residues 327–685 (YYLRKASARA…ESFEKLVTSI (359 aa)) are Cytoplasmic-facing. Residues 397–682 (KASAFLLGKS…SVLESFEKLV (286 aa)) form the Protein kinase domain. 3 positions are modified to phosphoserine: Ser-399, Ser-480, and Ser-590.

The protein belongs to the protein kinase superfamily. Ser/Thr protein kinase family.

Its subcellular location is the cell membrane. The chain is Probable inactive leucine-rich repeat receptor-like protein kinase At1g66830 from Arabidopsis thaliana (Mouse-ear cress).